A 307-amino-acid polypeptide reads, in one-letter code: HPr kinase/phosphorylase (307 aa).

Residues His-136 and Lys-157 contribute to the active site. 151–158 (GESGIGKS) is an ATP binding site. Ser-158 contacts Mg(2+). The active-site Proton acceptor; for phosphorylation activity. Proton donor; for dephosphorylation activity is the Asp-175. The interval 198 to 207 (LEVRGMGIID) is important for the catalytic mechanism of both phosphorylation and dephosphorylation. Glu-199 is a Mg(2+) binding site. The active site involves Arg-240. The segment at 261–266 (PIRPGR) is important for the catalytic mechanism of dephosphorylation.

The protein belongs to the HPrK/P family. As to quaternary structure, homohexamer. Mg(2+) serves as cofactor.

It carries out the reaction [HPr protein]-L-serine + ATP = [HPr protein]-O-phospho-L-serine + ADP + H(+). The enzyme catalyses [HPr protein]-O-phospho-L-serine + phosphate + H(+) = [HPr protein]-L-serine + diphosphate. Functionally, catalyzes the ATP- as well as the pyrophosphate-dependent phosphorylation of a specific serine residue in HPr, a phosphocarrier protein of the phosphoenolpyruvate-dependent sugar phosphotransferase system (PTS). HprK/P also catalyzes the pyrophosphate-producing, inorganic phosphate-dependent dephosphorylation (phosphorolysis) of seryl-phosphorylated HPr (P-Ser-HPr). The two antagonistic activities of HprK/P are regulated by several intracellular metabolites, which change their concentration in response to the absence or presence of rapidly metabolisable carbon sources (glucose, fructose, etc.) in the growth medium. Therefore, by controlling the phosphorylation state of HPr, HPrK/P is a sensor enzyme that plays a major role in the regulation of carbon metabolism and sugar transport: it mediates carbon catabolite repression (CCR), and regulates PTS-catalyzed carbohydrate uptake and inducer exclusion. The polypeptide is HPr kinase/phosphorylase (Clostridium novyi (strain NT)).